Consider the following 244-residue polypeptide: Precorrin-6A reductase (244 aa).

The protein belongs to the precorrin-6x reductase family.

It carries out the reaction precorrin-6B + NADP(+) = precorrin-6A + NADPH + 2 H(+). It participates in cofactor biosynthesis; adenosylcobalamin biosynthesis; cob(II)yrinate a,c-diamide from precorrin-2 (aerobic route): step 6/10. Functionally, catalyzes the reduction of the macrocycle of precorrin-6X into precorrin-6Y. This Mycobacterium tuberculosis (strain CDC 1551 / Oshkosh) protein is Precorrin-6A reductase (cobK).